The sequence spans 149 residues: Transcriptional repressor NrdR (149 aa).

Residues 3-34 fold into a zinc finger; the sequence is CPFCSENDTKVIDSRLVADGHQVRRRRQCLAC. An ATP-cone domain is found at 49-139; that stretch reads PRVIKSNGNR…VYRSFEDVRE (91 aa).

It belongs to the NrdR family. Zn(2+) serves as cofactor.

Its function is as follows. Negatively regulates transcription of bacterial ribonucleotide reductase nrd genes and operons by binding to NrdR-boxes. This is Transcriptional repressor NrdR from Vibrio cholerae serotype O1 (strain ATCC 39541 / Classical Ogawa 395 / O395).